The sequence spans 327 residues: Undecaprenyl-phosphate 4-deoxy-4-formamido-L-arabinose transferase (327 aa).

At 1 to 235 (MFDAAPIKKV…TCLTTTPLRL (235 aa)) the chain is on the cytoplasmic side. A helical transmembrane segment spans residues 236-256 (LSLLGSVIAIGGFSLSVLLIV). At 257-269 (LRLALGPQWAAEG) the chain is on the periplasmic side. A helical membrane pass occupies residues 270–290 (VFMLFAVLFTFIGAQFIGMGL). The Cytoplasmic portion of the chain corresponds to 291–327 (LGEYIGRIYNDVRARPRYFVQQVIYPESTPFTEESHQ).

The protein belongs to the glycosyltransferase 2 family.

It localises to the cell inner membrane. The enzyme catalyses UDP-4-deoxy-4-formamido-beta-L-arabinose + di-trans,octa-cis-undecaprenyl phosphate = 4-deoxy-4-formamido-alpha-L-arabinopyranosyl di-trans,octa-cis-undecaprenyl phosphate + UDP. It participates in glycolipid biosynthesis; 4-amino-4-deoxy-alpha-L-arabinose undecaprenyl phosphate biosynthesis; 4-amino-4-deoxy-alpha-L-arabinose undecaprenyl phosphate from UDP-4-deoxy-4-formamido-beta-L-arabinose and undecaprenyl phosphate: step 1/2. The protein operates within bacterial outer membrane biogenesis; lipopolysaccharide biosynthesis. Functionally, catalyzes the transfer of 4-deoxy-4-formamido-L-arabinose from UDP to undecaprenyl phosphate. The modified arabinose is attached to lipid A and is required for resistance to polymyxin and cationic antimicrobial peptides. This chain is Undecaprenyl-phosphate 4-deoxy-4-formamido-L-arabinose transferase, found in Salmonella choleraesuis (strain SC-B67).